The primary structure comprises 318 residues: Olfactory receptor-like protein COR3 (318 aa).

The Extracellular segment spans residues 1–26; it reads MASGNCTTPTTFILSGLTDNPGLQMP. A glycan (N-linked (GlcNAc...) asparagine) is linked at Asn-5. The chain crosses the membrane as a helical span at residues 27 to 49; that stretch reads LFMVFLAIYTITLLTNLGLIRLI. Over 50–57 the chain is Cytoplasmic; it reads SVDLHLQT. The chain crosses the membrane as a helical span at residues 58-79; sequence PMYIFLQNLSFTDAAYSTVITP. Residues 80-100 lie on the Extracellular side of the membrane; it reads KMLATFLEERKTISYVGCILQ. Residues Cys-97 and Cys-179 are joined by a disulfide bond. Residues 101 to 120 traverse the membrane as a helical segment; it reads YFSFVLLTTSECLLLAVMAY. Topologically, residues 121–139 are cytoplasmic; that stretch reads DRYVAICKPLLYPAIMTKA. A helical membrane pass occupies residues 140 to 164; that stretch reads VCWRLVESLYFLAFLNSLVHTCGLL. Topologically, residues 165–205 are extracellular; sequence KLSFCYSNVVNHFFCDISPLFQISSSSIAISELLVIISGSL. A helical transmembrane segment spans residues 206 to 226; sequence FVMSSIIIILISYVFIILTVV. Residues 227–239 are Cytoplasmic-facing; sequence MIRSKDGKYKAFS. A helical transmembrane segment spans residues 240 to 260; that stretch reads TCTSHLMAVSLFHGTVIFMYL. Residues 261–271 are Extracellular-facing; it reads RPVKLFSLDTD. Residues 272–292 traverse the membrane as a helical segment; it reads KIASLFYTVVIPMLNPLIYSW. The Cytoplasmic portion of the chain corresponds to 293–318; it reads RNKEVKDALRRLTATTFGFIDSKAVQ.

Belongs to the G-protein coupled receptor 1 family.

The protein localises to the cell membrane. In terms of biological role, odorant receptor. The sequence is that of Olfactory receptor-like protein COR3 (COR3) from Gallus gallus (Chicken).